Reading from the N-terminus, the 363-residue chain is UDP-3-O-acylglucosamine N-acyltransferase (363 aa).

Catalysis depends on H266, which acts as the Proton acceptor.

It belongs to the transferase hexapeptide repeat family. LpxD subfamily. Homotrimer.

The catalysed reaction is a UDP-3-O-[(3R)-3-hydroxyacyl]-alpha-D-glucosamine + a (3R)-hydroxyacyl-[ACP] = a UDP-2-N,3-O-bis[(3R)-3-hydroxyacyl]-alpha-D-glucosamine + holo-[ACP] + H(+). It participates in bacterial outer membrane biogenesis; LPS lipid A biosynthesis. Its function is as follows. Catalyzes the N-acylation of UDP-3-O-acylglucosamine using 3-hydroxyacyl-ACP as the acyl donor. Is involved in the biosynthesis of lipid A, a phosphorylated glycolipid that anchors the lipopolysaccharide to the outer membrane of the cell. This chain is UDP-3-O-acylglucosamine N-acyltransferase, found in Bordetella bronchiseptica (strain ATCC BAA-588 / NCTC 13252 / RB50) (Alcaligenes bronchisepticus).